A 631-amino-acid chain; its full sequence is Phosphomethylpyrimidine synthase (631 aa).

Residues asparagine 239, methionine 268, tyrosine 297, histidine 333, serine 353–glycine 355, aspartate 394–arginine 397, and glutamate 433 contribute to the substrate site. Histidine 437 lines the Zn(2+) pocket. A substrate-binding site is contributed by tyrosine 460. Histidine 501 contacts Zn(2+). [4Fe-4S] cluster contacts are provided by cysteine 581, cysteine 584, and cysteine 589.

Belongs to the ThiC family. In terms of assembly, homodimer. [4Fe-4S] cluster is required as a cofactor.

It catalyses the reaction 5-amino-1-(5-phospho-beta-D-ribosyl)imidazole + S-adenosyl-L-methionine = 4-amino-2-methyl-5-(phosphooxymethyl)pyrimidine + CO + 5'-deoxyadenosine + formate + L-methionine + 3 H(+). It participates in cofactor biosynthesis; thiamine diphosphate biosynthesis. In terms of biological role, catalyzes the synthesis of the hydroxymethylpyrimidine phosphate (HMP-P) moiety of thiamine from aminoimidazole ribotide (AIR) in a radical S-adenosyl-L-methionine (SAM)-dependent reaction. This is Phosphomethylpyrimidine synthase from Citrobacter koseri (strain ATCC BAA-895 / CDC 4225-83 / SGSC4696).